The primary structure comprises 135 residues: Large-conductance mechanosensitive channel (135 aa).

2 helical membrane passes run 10 to 30 (FAMK…AAFG) and 76 to 96 (GAFI…FCAI).

It belongs to the MscL family. In terms of assembly, homopentamer.

Its subcellular location is the cell inner membrane. Its function is as follows. Channel that opens in response to stretch forces in the membrane lipid bilayer. May participate in the regulation of osmotic pressure changes within the cell. This is Large-conductance mechanosensitive channel from Proteus mirabilis (strain HI4320).